The chain runs to 305 residues: Auxin-responsive protein IAA27 (305 aa).

Residues 45–49 (LRLGL) carry the EAR-like (transcriptional repression) motif. Disordered regions lie at residues 96 to 119 (TTATGDVGSGSGPRTSVVKDGKST) and 155 to 180 (KNSMASSQSQKPGNNSETEEAEAKSG). The segment covering 155 to 170 (KNSMASSQSQKPGNNS) has biased composition (polar residues). Positions 185 to 287 (CLYVKVSMEG…SCKKLRIMKS (103 aa)) constitute a PB1 domain.

It belongs to the Aux/IAA family. Homodimers and heterodimers. Interacts with phytochrome A. Interacts with TPL.

It is found in the nucleus. Aux/IAA proteins are short-lived transcriptional factors that function as repressors of early auxin response genes at low auxin concentrations. Repression is thought to result from the interaction with auxin response factors (ARFs), proteins that bind to the auxin-responsive promoter element (AuxRE). Formation of heterodimers with ARF proteins may alter their ability to modulate early auxin response genes expression. This chain is Auxin-responsive protein IAA27 (IAA27), found in Arabidopsis thaliana (Mouse-ear cress).